Reading from the N-terminus, the 497-residue chain is Cytochrome P450 monooxygenase opdB (497 aa).

Residues 26–46 (YLGAMAGSVILLISAFTLSLG) traverse the membrane as a helical segment. The interval 69 to 90 (MSKFTRSRELSQQGEDAAGTEP) is disordered. Heme is bound at residue Cys-454.

It depends on heme as a cofactor.

It is found in the membrane. It participates in secondary metabolite biosynthesis. Its function is as follows. Cytochrome P450 monooxygenase; part of the gene cluster that mediates the biosynthesis of oxopyrrolidines, polyketide-amino acid hybrid compounds with feature structures of tetramic acid. Does not seem to play a role in oxopyrrolidines A and B biosynthesis. May be involved in further modifications of these oxopyrrolidines. This is Cytochrome P450 monooxygenase opdB from Penicillium oxalicum (strain 114-2 / CGMCC 5302) (Penicillium decumbens).